We begin with the raw amino-acid sequence, 1039 residues long: Serine/threonine-protein kinase Tao (1039 aa).

A Protein kinase domain is found at 27–280 (FEDLREIGHG…SAKLLTHAYV (254 aa)). Residues 33 to 41 (IGHGSFGAV) and Lys-56 contribute to the ATP site. Asp-150 (proton acceptor) is an active-site residue. Disordered stretches follow at residues 324 to 457 (SAVG…NSAS), 485 to 508 (GGGG…LADR), 629 to 648 (HQQD…KKLH), and 677 to 707 (WKRE…KQHE). Residues 341 to 350 (SSKSNSITSE) show a composition bias toward polar residues. Over residues 359-376 (SAASSQSSSSNSIPAAAQ) the composition is skewed to low complexity. Residues 377-387 (NHHHIAAHHHQ) show a composition bias toward basic residues. Low complexity-rich tracts occupy residues 388–397 (QAASAAVAAA) and 413–429 (PSGQ…VSRN). Residues 444–454 (HSMNNNVTPTN) show a composition bias toward polar residues. Residues 485–500 (GGGGTGTGGSGGGSPA) show a composition bias toward gly residues. 2 coiled-coil regions span residues 631–765 (QDVE…MLLK) and 835–993 (KQFR…DNES). A compositionally biased stretch (basic and acidic residues) spans 677-693 (WKRELSMDESTPKRQRD).

This sequence belongs to the protein kinase superfamily. STE Ser/Thr protein kinase family. STE20 subfamily. In terms of assembly, interacts with Schip1; the interaction enhances Tao kinase activity. The cofactor is Mg(2+). In terms of processing, autophosphorylated. As to expression, in the posterior midgut, expressed in almost all intestinal cell types including intestinal stem cells and enterocytes (at protein level). Maternally expressed, ubiquitously distributed in the egg and early embryo and enriched in the germ plasm at the posterior pole of the early embryo including the pole cells.

It is found in the cytoplasm. Its subcellular location is the cytoskeleton. The protein localises to the spindle. The protein resides in the membrane. It localises to the perikaryon. It is found in the cell cortex. Its subcellular location is the cell projection. The protein localises to the axon. The catalysed reaction is L-seryl-[protein] + ATP = O-phospho-L-seryl-[protein] + ADP + H(+). The enzyme catalyses L-threonyl-[protein] + ATP = O-phospho-L-threonyl-[protein] + ADP + H(+). Serine/threonine-protein kinase which regulates the Hippo/SWH (Sav/Wts/Hpo) signaling pathway, a signaling pathway that plays a pivotal role in organ size control and tumor suppression by restricting proliferation and promoting apoptosis. The core of this pathway is composed of a kinase cascade wherein Hippo (hpo), in complex with its regulatory protein Salvador (sav), phosphorylates and activates Warts (wts) in complex with its regulatory protein Mats, which in turn phosphorylates and inactivates the Yorkie (yki) oncoprotein. In imaginal cells, phosphorylates and activates hpo and leads to repression of yki. In the midgut, negatively regulates the proliferation of intestinal stem cells through the Hippo/SWH pathway. Independent of the hippo/SWH pathway, regulates epithelial morphogenesis in follicle cells by promoting the endocytosis of Fas2 and reducing lateral adhesion between epithelial cells which, in turn, permits shrinking of the lateral membrane and initiates morphogenesis of the squamous epithelium. Required for the development of both the mushroom body and the ellipsoid body in the brain and may act as a negative regulator of the par-1 kinase. Negatively regulates the JNK pathway which increases sensitivity to ethanol exposure. Plays a role in the control of cell shape by negatively regulating the growth of microtubule plus-ends as they contact the actin-rich cell cortex. Required for the induction of apoptosis in pole cells by promoting expression of skl which enhances activity of the apoptosis activator hid. Its function is as follows. Induces in vitro expression of large, highly dynamic, microtubule-dependent lamellopodia-like cytoplasmic expansions which constantly probe the environment. In terms of biological role, induces in vitro expression of actin-dependent filopodia-like cytoplasmic protrusions which firmly attach to the substrate. Antagonizes the activity of isoform D. This Drosophila melanogaster (Fruit fly) protein is Serine/threonine-protein kinase Tao.